We begin with the raw amino-acid sequence, 786 residues long: Diamine oxidase [copper-containing] 1, peroxisomal (786 aa).

419-430 contacts substrate; sequence AFDAGEDGLGKN. Catalysis depends on D421, which acts as the Proton acceptor. C440 and C466 are joined by a disulfide. Substrate is bound at residue 502-507; that stretch reads VANYEY. Y505 functions as the Schiff-base intermediate with substrate; via topaquinone in the catalytic mechanism. The residue at position 505 (Y505) is a 2',4',5'-topaquinone. Cu cation contacts are provided by H555 and H557. The Mn(2+) site is built by D710 and I711. H721 serves as a coordination point for Cu cation.

It belongs to the copper/topaquinone oxidase family. In terms of assembly, homodimer. It depends on Cu cation as a cofactor. Zn(2+) is required as a cofactor. L-topaquinone serves as cofactor. In terms of processing, topaquinone (TPQ) is generated by copper-dependent autoxidation of a specific tyrosyl residue. Mainly expressed in roots, and, to a lower extent, in leaves and stems.

It localises to the peroxisome. The catalysed reaction is a primary methyl amine + O2 + H2O = an aldehyde + H2O2 + NH4(+). It catalyses the reaction N-methylputrescine + O2 + H2O = 4-methylaminobutanal + H2O2 + NH4(+). It participates in alkaloid biosynthesis; nicotine biosynthesis. It functions in the pathway amine and polyamine degradation; putrescine degradation. Its function is as follows. Involved in putrescine catabolism in peroxisomes. May also be involved in the biosynthesis of pyridine alkaloid natural products, leading mainly to the production of anabasine, anatabine, nicotine and nornicotine, effective deterrents against herbivores with antiparasitic and pesticide properties (neurotoxins); nornicotine serves as the precursor in the synthesis of the carcinogen compound N'-nitrosonornicotine (NNN). Oxidizes preferentially non-N-methylated amines. This chain is Diamine oxidase [copper-containing] 1, peroxisomal, found in Nicotiana tabacum (Common tobacco).